An 89-amino-acid chain; its full sequence is Putative protein T-ENOL (89 aa).

Disordered stretches follow at residues 1 to 31 (MAST…KASL) and 54 to 89 (RSHM…TDTR).

Specifically expressed in testis (at protein level).

This chain is Putative protein T-ENOL, found in Rattus norvegicus (Rat).